Here is a 95-residue protein sequence, read N- to C-terminus: Small ribosomal subunit protein bS16 (95 aa).

It belongs to the bacterial ribosomal protein bS16 family.

The chain is Small ribosomal subunit protein bS16 from Mycoplasma genitalium (strain ATCC 33530 / DSM 19775 / NCTC 10195 / G37) (Mycoplasmoides genitalium).